Consider the following 37-residue polypeptide: Cytochrome b6-f complex subunit 5 (37 aa).

A helical membrane pass occupies residues 5–25; sequence ILLGIVLGMVVVTLAGLFVAA.

It belongs to the PetG family. In terms of assembly, the 4 large subunits of the cytochrome b6-f complex are cytochrome b6, subunit IV (17 kDa polypeptide, PetD), cytochrome f and the Rieske protein, while the 4 small subunits are PetG, PetL, PetM and PetN. The complex functions as a dimer.

The protein resides in the cellular thylakoid membrane. Functionally, component of the cytochrome b6-f complex, which mediates electron transfer between photosystem II (PSII) and photosystem I (PSI), cyclic electron flow around PSI, and state transitions. PetG is required for either the stability or assembly of the cytochrome b6-f complex. This Synechococcus sp. (strain JA-2-3B'a(2-13)) (Cyanobacteria bacterium Yellowstone B-Prime) protein is Cytochrome b6-f complex subunit 5.